The following is a 280-amino-acid chain: Inner membrane ABC transporter permease protein YcjP (280 aa).

Residues 1 to 10 (MATNKRTLSR) are Cytoplasmic-facing. A helical transmembrane segment spans residues 11–31 (IGFYCGLALFLIITLFPFFVM). The Periplasmic portion of the chain corresponds to 32–53 (LMTSFKGAKEAISLHPTLLPQQ). The chain crosses the membrane as a helical span at residues 54–74 (WTLEHYVDIFNPMIFPFVDYF). The region spanning 74 to 265 (FRNSLVVSVV…LPVVIMYALS (192 aa)) is the ABC transmembrane type-1 domain. The Cytoplasmic segment spans residues 75–77 (RNS). The chain crosses the membrane as a helical span at residues 78–98 (LVVSVVSSVVAVFLGILGAYA). The Periplasmic segment spans residues 99–117 (LSRLRFKGRMTINASFYTV). A helical transmembrane segment spans residues 118–138 (YMFSGILLVVPLFKIITALGI). Topologically, residues 139–140 (YD) are cytoplasmic. Residues 141–161 (TEMALIITMVTQTLPTAVFML) traverse the membrane as a helical segment. At 162–189 (KSYFDTIPDEIEEAAMMDGLNRLQIIFR) the chain is on the periplasmic side. The chain crosses the membrane as a helical span at residues 190–210 (ITVPLAMSGLISVFVYCFMVA). The Cytoplasmic segment spans residues 211–214 (WNDY). A helical membrane pass occupies residues 215–235 (LFASIFLSSASNFTLPVGLNA). Residues 236 to 242 (LFSTPDY) lie on the Periplasmic side of the membrane. A helical membrane pass occupies residues 243–263 (IWGRMMAASLVTALPVVIMYA). Topologically, residues 264-280 (LSERFIKSGLTAGGVKG) are cytoplasmic.

Belongs to the binding-protein-dependent transport system permease family. MalFG subfamily.

Its subcellular location is the cell inner membrane. Probably part of the binding-protein-dependent transport system YcjNOP. Probably responsible for the translocation of the substrate across the membrane. This chain is Inner membrane ABC transporter permease protein YcjP (ycjP), found in Escherichia coli (strain K12).